A 196-amino-acid polypeptide reads, in one-letter code: FMN-dependent NADH:quinone oxidoreductase (196 aa).

FMN contacts are provided by residues Ser10 and 17-19; that span reads SYS.

The protein belongs to the azoreductase type 1 family. As to quaternary structure, homodimer. The cofactor is FMN.

The enzyme catalyses 2 a quinone + NADH + H(+) = 2 a 1,4-benzosemiquinone + NAD(+). It carries out the reaction N,N-dimethyl-1,4-phenylenediamine + anthranilate + 2 NAD(+) = 2-(4-dimethylaminophenyl)diazenylbenzoate + 2 NADH + 2 H(+). Functionally, quinone reductase that provides resistance to thiol-specific stress caused by electrophilic quinones. Also exhibits azoreductase activity. Catalyzes the reductive cleavage of the azo bond in aromatic azo compounds to the corresponding amines. This Metamycoplasma arthritidis (strain 158L3-1) (Mycoplasma arthritidis) protein is FMN-dependent NADH:quinone oxidoreductase.